Consider the following 66-residue polypeptide: Neurotoxin Cex11 (66 aa).

The LCN-type CS-alpha/beta domain occupies 1-64 (KEGYPVNIYT…SYPYPEKSCG (64 aa)). 4 cysteine pairs are disulfide-bonded: C12/C63, C16/C39, C25/C44, and C29/C46. The residue at position 63 (C63) is a Cysteine amide. Residues 64–66 (GRK) constitute a propeptide that is removed on maturation.

The protein belongs to the long (4 C-C) scorpion toxin superfamily. Sodium channel inhibitor family. Beta subfamily. As to expression, expressed by the venom gland.

The protein resides in the secreted. Its function is as follows. Beta toxins bind voltage-independently at site-4 of sodium channels (Nav) and shift the voltage of activation toward more negative potentials thereby affecting sodium channel activation and promoting spontaneous and repetitive firing. This is Neurotoxin Cex11 from Centruroides exilicauda (Bark scorpion).